The chain runs to 259 residues: Phosphate import ATP-binding protein PstB (259 aa).

In terms of domain architecture, ABC transporter spans 11-254 (AESKNLNFYY…PDNPRTEDYI (244 aa)). 43-50 (GPSGCGKS) contributes to the ATP binding site.

It belongs to the ABC transporter superfamily. Phosphate importer (TC 3.A.1.7) family. In terms of assembly, the complex is composed of two ATP-binding proteins (PstB), two transmembrane proteins (PstC and PstA) and a solute-binding protein (PstS).

The protein localises to the cell inner membrane. It catalyses the reaction phosphate(out) + ATP + H2O = ADP + 2 phosphate(in) + H(+). In terms of biological role, part of the ABC transporter complex PstSACB involved in phosphate import. Responsible for energy coupling to the transport system. The polypeptide is Phosphate import ATP-binding protein PstB (Geobacter sulfurreducens (strain ATCC 51573 / DSM 12127 / PCA)).